A 2514-amino-acid polypeptide reads, in one-letter code: Polyprotein P1234 (2514 aa).

The Alphavirus-like MT domain maps to 28–259; that stretch reads EPKQVTPNDH…ESRKLLQSWH (232 aa). Residues 244 to 263 are nsP1 membrane-binding; the sequence is GSTLYPESRKLLQSWHLPSV. Residues Cys-417 and Cys-419 are each lipidated (S-palmitoyl cysteine; by host). A (+)RNA virus helicase ATP-binding domain is found at 690–842; sequence DLTSPPYHEF…HNICTQVYHK (153 aa). 721 to 728 serves as a coordination point for a ribonucleoside 5'-triphosphate; that stretch reads GVPGSGKS. The region spanning 843–991 is the (+)RNA virus helicase C-terminal domain; the sequence is SISRRCTLPV…IKEWEAEHAS (149 aa). The 324-residue stretch at 1004–1327 folds into the Peptidase C9 domain; the sequence is DTFQNKANVC…NQLNAVYAGL (324 aa). Residues 1005–1024 form a nucleolus localization signal region; that stretch reads TFQNKANVCWAKCLVPILDT. The For cysteine protease nsP2 activity role is filled by Cys-1013. A Nuclear export signal motif is present at residues 1058 to 1067; the sequence is TRIYGVDLDS. The For cysteine protease nsP2 activity role is filled by His-1083. The short motif at 1182–1186 is the Nuclear localization signal element; it reads PTKRV. The 160-residue stretch at 1334 to 1493 folds into the Macro domain; it reads APSYRVKRMD…KITEAISLRS (160 aa). The ADP-D-ribose site is built by Asp-1343, Asn-1357, Gly-1365, Gly-1445, Val-1446, and Tyr-1447. Positions 1595, 1597, 1620, and 1638 each coordinate Zn(2+). Short sequence motifs (FGDF; binding to host G3BP1) lie at residues 1852–1855 and 1870–1873; these read FGDF. In terms of domain architecture, RdRp catalytic spans 2268-2383; sequence DAVLETDIAS…HGVVSDALMA (116 aa).

Interacts with non-structural protein 3. Interacts with RNA-directed RNA polymerase nsP4. Interacts with protease nsP2. interacts with itself. As to quaternary structure, interacts with mRNA-capping enzyme nsP1. Interacts with host DDX1. Interacts with host DDX3. Interacts (via C-terminus) with host G3BP1; this interaction inhibits the formation of host stress granules on viral mRNAs and the nsp3-G3BP1 complexes bind viral RNAs and probably orchestrate the assembly of viral replication complexes. Interacts (via C-terminus) with host G3BP2; this interaction inhibits the formation of host stress granules on viral mRNAs and the nsp3-G3BP2 complexes bind viral RNAs and probably orchestrate the assembly of viral replication complexes. In terms of assembly, interacts with mRNA-capping enzyme nsP1. Interacts with protease nsP2. interacts with itself. Interacts with RNA-directed RNA polymerase nsP4. Interacts with mRNA-capping enzyme nsP1. Interacts with KPNA1/karyopherin-alpha1; this interaction probably allows the active transport of protease nsP2 into the host nucleus. The cofactor is Mg(2+). Mn(2+) serves as cofactor. Post-translationally, specific enzymatic cleavages in vivo yield mature proteins. The processing of the polyprotein is temporally regulated. In early stages (1.7 hpi), P1234 is first cleaved in trans through its nsP2 protease activity, releasing P123 and nsP4, which associate to form the early replication complex. At the same time, P1234 is also cut at the nsP1/nsP2 site early in infection but with lower efficiency. After replication of the viral minus-strand RNAs (4 hpi), the polyproteins are cut at the nsP1/nsP2 and nsP2/nsP3 sites very efficiently, preventing accumulation of P123 and P1234 and allowing the formation of the late replication complex. NsP3/nsP4 site is not cleaved anymore and P34 is produced rather than nsP4. In terms of processing, specific enzymatic cleavages in vivo yield mature proteins. The processing of the polyprotein is temporally regulated. In early stages (1.7 hpi), P123 is cleaved at the nsP1/nsP2 site with low efficiency. After replication of the viral minus-strand RNAs (4 hpi), the polyproteins are cut at the nsP1/nsP2 and nsP2/nsP3 sites very efficiently, preventing accumulation of P123 and allowing the formation of the late replication complex. Palmitoylated by host palmitoyltransferases ZDHHC2 and ZDHHC19. Post-translationally, phosphorylated by host on serines and threonines. In terms of processing, ubiquitinated; targets the protein for rapid degradation via the ubiquitin system. Nsp4 is present in extremely low quantities due to low frequency of translation through the amber stop-codon and the degradation by the ubiquitin pathway.

Its subcellular location is the host cytoplasmic vesicle membrane. It localises to the host cell membrane. The protein localises to the host cell projection. The protein resides in the host filopodium. It is found in the host nucleus. Its subcellular location is the host cytoplasm. It catalyses the reaction GTP + S-adenosyl-L-methionine = N(7)-methyl-GTP + S-adenosyl-L-homocysteine. The catalysed reaction is N(7)-methyl-GTP + L-histidyl-[protein] = N(tele)-(N(7)-methylguanosine 5'-phospho)-L-histidyl-[protein] + diphosphate. The enzyme catalyses N(tele)-(N(7)-methylguanosine 5'-phospho)-L-histidyl-[protein] + a 5'-end diphospho-(purine-ribonucleoside) in mRNA + H(+) = a 5'-end (N(7)-methyl 5'-triphosphoguanosine)-(purine-ribonucleoside) in mRNA + L-histidyl-[protein]. It carries out the reaction a 5'-end triphospho-ribonucleoside in mRNA + H2O = a 5'-end diphospho-ribonucleoside in mRNA + phosphate + H(+). It catalyses the reaction a ribonucleoside 5'-triphosphate + H2O = a ribonucleoside 5'-diphosphate + phosphate + H(+). The catalysed reaction is ATP + H2O = ADP + phosphate + H(+). The enzyme catalyses RNA(n) + a ribonucleoside 5'-triphosphate = RNA(n+1) + diphosphate. It carries out the reaction 4-O-(ADP-D-ribosyl)-L-aspartyl-[protein] + H2O = L-aspartyl-[protein] + ADP-D-ribose + H(+). It catalyses the reaction 5-O-(ADP-D-ribosyl)-L-glutamyl-[protein] + H2O = L-glutamyl-[protein] + ADP-D-ribose + H(+). The catalysed reaction is RNA(n) + ATP = RNA(n)-3'-adenine ribonucleotide + diphosphate. The enzyme catalyses ADP-alpha-D-ribose 1''-phosphate + H2O = ADP-D-ribose + phosphate. Its function is as follows. Inactive precursor of the viral replicase, which is activated by cleavages carried out by the viral protease nsP2. In terms of biological role, the early replication complex formed by the polyprotein P123 and nsP4 synthesizes minus-strand RNAs. As soon P123 is cleaved into mature proteins, the plus-strand RNAs synthesis begins. Functionally, cytoplasmic capping enzyme that catalyzes two virus-specific reactions: methyltransferase and nsP1 guanylyltransferase. mRNA-capping is necessary since all viral RNAs are synthesized in the cytoplasm, and host capping enzymes are restricted to the nucleus. The enzymatic reaction involves a covalent link between 7-methyl-GMP and nsP1, whereas eukaryotic capping enzymes form a covalent complex only with GMP. nsP1 capping consists in the following reactions: GTP is first methylated into 7-methyl-GMP and then is covalently linked to nsP1 to form the m7GMp-nsP1 complex from which 7-methyl-GMP complex is transferred to the mRNA to create the cap structure. NsP1 is also needed for the initiation of the minus-strand RNAs synthesis. Probably serves as a membrane anchor for the replication complex composed of nsP1-nsP4. Palmitoylated nsP1 is remodeling host cell cytoskeleton, and induces filopodium-like structure formation at the surface of the host cell. Multifunctional protein whose N-terminus is part of the RNA polymerase complex and displays NTPase, RNA triphosphatase and helicase activities. NTPase and RNA triphosphatase are involved in viral RNA capping and helicase keeps a check on the dsRNA replication intermediates. The C-terminus harbors a protease that specifically cleaves the polyproteins and releases the mature proteins. Required for the shutoff of minus-strand RNAs synthesis. Specifically inhibits the host IFN response by promoting the nuclear export of host STAT1. Also inhibits host transcription by inducing the rapid proteasome-dependent degradation of POLR2A, a catalytic subunit of the RNAPII complex. The resulting inhibition of cellular protein synthesis serves to ensure maximal viral gene expression and to evade host immune response. Its function is as follows. Seems to be essential for minus-strand RNAs and subgenomic 26S mRNAs synthesis. Displays mono-ADP-ribosylhydrolase activity. ADP-ribosylation is a post-translational modification that controls various processes of the host cell and the virus probably needs to revert it for optimal viral replication. Binds proteins of G3BP family and sequesters them into the viral RNA replication complexes thereby inhibiting the formation of host stress granules on viral mRNAs. The nsp3-G3BP complexes bind viral RNAs and probably orchestrate the assembly of viral replication complexes, thanks to the ability of G3BP family members to self-assemble and bind DNA. In terms of biological role, RNA dependent RNA polymerase. Replicates genomic and antigenomic RNA by recognizing replications specific signals. The early replication complex formed by the polyprotein P123 and nsP4 synthesizes minus-strand RNAs. The late replication complex composed of fully processed nsP1-nsP4 is responsible for the production of genomic and subgenomic plus-strand RNAs. This chain is Polyprotein P1234, found in O'nyong-nyong virus (strain Gulu) (ONNV).